A 668-amino-acid chain; its full sequence is UvrABC system protein B (668 aa).

Residues 25 to 176 (THLQSGHSRQ…DQRQLLRNLA (152 aa)) form the Helicase ATP-binding domain. Residue 38 to 45 (GATGTGKT) participates in ATP binding. The Beta-hairpin motif lies at 91–114 (YYDYYQPEAYIPVTDTFIEKTASI). Residues 429–591 (QVDDLLAEIQ…ITPQPVKKGS (163 aa)) enclose the Helicase C-terminal domain. One can recognise a UVR domain in the interval 626 to 661 (PELITQLEAQMKEAAKNLEFEEAAKYRDRIKNLRSK).

This sequence belongs to the UvrB family. In terms of assembly, forms a heterotetramer with UvrA during the search for lesions. Interacts with UvrC in an incision complex.

Its subcellular location is the cytoplasm. The UvrABC repair system catalyzes the recognition and processing of DNA lesions. A damage recognition complex composed of 2 UvrA and 2 UvrB subunits scans DNA for abnormalities. Upon binding of the UvrA(2)B(2) complex to a putative damaged site, the DNA wraps around one UvrB monomer. DNA wrap is dependent on ATP binding by UvrB and probably causes local melting of the DNA helix, facilitating insertion of UvrB beta-hairpin between the DNA strands. Then UvrB probes one DNA strand for the presence of a lesion. If a lesion is found the UvrA subunits dissociate and the UvrB-DNA preincision complex is formed. This complex is subsequently bound by UvrC and the second UvrB is released. If no lesion is found, the DNA wraps around the other UvrB subunit that will check the other stand for damage. The sequence is that of UvrABC system protein B from Acaryochloris marina (strain MBIC 11017).